Consider the following 224-residue polypeptide: Large ribosomal subunit protein uL3 (224 aa).

An N5-methylglutamine modification is found at Q159.

The protein belongs to the universal ribosomal protein uL3 family. Part of the 50S ribosomal subunit. Forms a cluster with proteins L14 and L19. Post-translationally, methylated by PrmB.

One of the primary rRNA binding proteins, it binds directly near the 3'-end of the 23S rRNA, where it nucleates assembly of the 50S subunit. This Herminiimonas arsenicoxydans protein is Large ribosomal subunit protein uL3.